The chain runs to 276 residues: Undecaprenyl-diphosphatase (276 aa).

A run of 7 helical transmembrane segments spans residues 42–62, 88–108, 116–136, 149–169, 187–207, 222–242, and 253–273; these read AVTA…IVYF, ALLG…GYLG, LRSL…IVYA, MRLP…VPGV, VAAT…AGIF, SLVV…AWLL, and FVWY…TGLV.

The protein belongs to the UppP family.

The protein resides in the cell membrane. It catalyses the reaction di-trans,octa-cis-undecaprenyl diphosphate + H2O = di-trans,octa-cis-undecaprenyl phosphate + phosphate + H(+). Catalyzes the dephosphorylation of undecaprenyl diphosphate (UPP). Confers resistance to bacitracin. The chain is Undecaprenyl-diphosphatase from Acidothermus cellulolyticus (strain ATCC 43068 / DSM 8971 / 11B).